The sequence spans 151 residues: UPF0208 membrane protein PC1_2779 (151 aa).

2 helical membrane passes run 46 to 66 (FGIRIMPPLAVFTLTWQIALG) and 69 to 89 (LGPAIATALFACSLPLQGLWW).

It belongs to the UPF0208 family.

Its subcellular location is the cell inner membrane. This chain is UPF0208 membrane protein PC1_2779, found in Pectobacterium carotovorum subsp. carotovorum (strain PC1).